Consider the following 344-residue polypeptide: Arginine N-succinyltransferase (344 aa).

Residue Leu125 participates in succinyl-CoA binding. Catalysis depends on His229, which acts as the Proton donor.

This sequence belongs to the arginine N-succinyltransferase family.

It carries out the reaction succinyl-CoA + L-arginine = N(2)-succinyl-L-arginine + CoA + H(+). Its pathway is amino-acid degradation; L-arginine degradation via AST pathway; L-glutamate and succinate from L-arginine: step 1/5. Catalyzes the transfer of succinyl-CoA to arginine to produce N(2)-succinylarginine. The chain is Arginine N-succinyltransferase from Escherichia coli O6:H1 (strain CFT073 / ATCC 700928 / UPEC).